Consider the following 277-residue polypeptide: Diaminopimelate epimerase (277 aa).

Substrate-binding residues include Asn15 and Asn74. The Proton donor role is filled by Cys83. Substrate contacts are provided by residues 84-85, Asn159, Asn194, and 212-213; these read GN and ER. The active-site Proton acceptor is the Cys221. 222–223 provides a ligand contact to substrate; the sequence is GT.

This sequence belongs to the diaminopimelate epimerase family. As to quaternary structure, homodimer.

It is found in the cytoplasm. The catalysed reaction is (2S,6S)-2,6-diaminopimelate = meso-2,6-diaminopimelate. Its pathway is amino-acid biosynthesis; L-lysine biosynthesis via DAP pathway; DL-2,6-diaminopimelate from LL-2,6-diaminopimelate: step 1/1. Functionally, catalyzes the stereoinversion of LL-2,6-diaminopimelate (L,L-DAP) to meso-diaminopimelate (meso-DAP), a precursor of L-lysine and an essential component of the bacterial peptidoglycan. This Corynebacterium glutamicum (strain R) protein is Diaminopimelate epimerase.